A 435-amino-acid chain; its full sequence is Serine carboxypeptidase-like 14 (435 aa).

Positions Met1 to Ser23 are cleaved as a signal peptide. Intrachain disulfides connect Cys82/Cys325, Cys246/Cys260, and Cys284/Cys291. The N-linked (GlcNAc...) asparagine glycan is linked to Asn103. Ser178 is an active-site residue. A glycan (N-linked (GlcNAc...) asparagine) is linked at Asn344. Residue Asp360 is part of the active site. The N-linked (GlcNAc...) asparagine glycan is linked to Asn376. The active site involves His413.

It belongs to the peptidase S10 family. In terms of tissue distribution, expressed in senescent leaves.

The protein resides in the secreted. Functionally, probable carboxypeptidase. The sequence is that of Serine carboxypeptidase-like 14 (SCPL14) from Arabidopsis thaliana (Mouse-ear cress).